The following is a 212-amino-acid chain: Fe/S biogenesis protein NfuA (212 aa).

Cys-169 and Cys-172 together coordinate [4Fe-4S] cluster.

This sequence belongs to the NfuA family. Homodimer. [4Fe-4S] cluster serves as cofactor.

Functionally, involved in iron-sulfur cluster biogenesis. Binds a 4Fe-4S cluster, can transfer this cluster to apoproteins, and thereby intervenes in the maturation of Fe/S proteins. Could also act as a scaffold/chaperone for damaged Fe/S proteins. In Acinetobacter baumannii (strain SDF), this protein is Fe/S biogenesis protein NfuA.